The sequence spans 217 residues: MAAHSIFTTTSTTNSFLYPISSSSSSPNINSSFLGVSLNVNAKFGQSLTLYAVTTPKPLTVFAATKKAVAVLKGNSNVEGVVTLSQDDDGPTTVNVRITGLAPGLHGFHLHEYGDTTNGCMSTGAHFNPNKLTHGAPGDEIRHAGDLGNIVANADGVAEVTLVDNQIPLTGPNSVVGRALVVHELEDDLGKGGHELSLTTGNAGGRLACGVVGLTPI.

Residues 1-63 (MAAHSIFTTT…TTPKPLTVFA (63 aa)) constitute a chloroplast transit peptide. The Cu cation site is built by H109, H111, and H126. C120 and C209 are disulfide-bonded. Zn(2+) is bound by residues H126, H134, H143, and D146. Residue H183 coordinates Cu cation.

It belongs to the Cu-Zn superoxide dismutase family. In terms of assembly, homotetramer. It depends on Cu cation as a cofactor. Requires Zn(2+) as cofactor.

It is found in the plastid. The protein localises to the chloroplast. The catalysed reaction is 2 superoxide + 2 H(+) = H2O2 + O2. Its function is as follows. Destroys radicals which are normally produced within the cells and which are toxic to biological systems. This chain is Superoxide dismutase [Cu-Zn], chloroplastic (SODCP.2), found in Solanum lycopersicum (Tomato).